The sequence spans 122 residues: Large ribosomal subunit protein uL14 (122 aa).

It belongs to the universal ribosomal protein uL14 family. In terms of assembly, part of the 50S ribosomal subunit. Forms a cluster with proteins L3 and L19. In the 70S ribosome, L14 and L19 interact and together make contacts with the 16S rRNA in bridges B5 and B8.

Functionally, binds to 23S rRNA. Forms part of two intersubunit bridges in the 70S ribosome. The sequence is that of Large ribosomal subunit protein uL14 from Streptococcus gordonii (strain Challis / ATCC 35105 / BCRC 15272 / CH1 / DL1 / V288).